Reading from the N-terminus, the 241-residue chain is Small ribosomal subunit protein eS4 (241 aa).

Residues leucine 37–lysine 100 enclose the S4 RNA-binding domain.

This sequence belongs to the eukaryotic ribosomal protein eS4 family.

The protein is Small ribosomal subunit protein eS4 of Methanospirillum hungatei JF-1 (strain ATCC 27890 / DSM 864 / NBRC 100397 / JF-1).